An 819-amino-acid polypeptide reads, in one-letter code: Putative U-box domain-containing protein 53 (819 aa).

2 disordered regions span residues 208–309 and 398–433; these read TSDT…NPQF and KETE…KEKL. Residues 223–237 show a composition bias toward low complexity; sequence ERTSSSCSSGSGANS. Positions 238–260 are enriched in polar residues; that stretch reads DVMSNALKSNPHTLSNKRMQNLP. Positions 278-296 are enriched in basic and acidic residues; that stretch reads DETKKRSSDAAEEASKRSS. The segment covering 297-307 has biased composition (polar residues); the sequence is PETSRSVSWNP. The stretch at 395 to 437 forms a coiled coil; it reads IAKKETEKFEQKRREEREAAQRREAEMKATHEAKEKEKLEESS. One can recognise a Protein kinase domain in the interval 460–728; that stretch reads FSEDLKIGMG…DLEDQILPVL (269 aa). ATP-binding positions include 466-474 and Lys-487; that span reads IGMGAYGDV. Residue Asp-582 is the Proton acceptor of the active site. Residues 748–819 enclose the U-box domain; that stretch reads QPPSHFFCPL…AIVEWRNRNQ (72 aa).

The protein belongs to the protein kinase superfamily. Ser/Thr protein kinase family.

It catalyses the reaction L-seryl-[protein] + ATP = O-phospho-L-seryl-[protein] + ADP + H(+). It carries out the reaction L-threonyl-[protein] + ATP = O-phospho-L-threonyl-[protein] + ADP + H(+). The catalysed reaction is S-ubiquitinyl-[E2 ubiquitin-conjugating enzyme]-L-cysteine + [acceptor protein]-L-lysine = [E2 ubiquitin-conjugating enzyme]-L-cysteine + N(6)-ubiquitinyl-[acceptor protein]-L-lysine.. It participates in protein modification; protein ubiquitination. Functions as an E3 ubiquitin ligase. The chain is Putative U-box domain-containing protein 53 (PUB53) from Arabidopsis thaliana (Mouse-ear cress).